A 573-amino-acid polypeptide reads, in one-letter code: Protein translocase subunit SecD (573 aa).

A helical membrane pass occupies residues 13–33 (YLSVFLVMLIGIYLLVFFTGD). Residues 127–200 (AQPAAEEPQP…PPAEAPATDP (74 aa)) form a disordered region. 2 stretches are compositionally biased toward pro residues: residues 135–154 (QPAP…PPPA) and 161–194 (SPQP…PPAE). Helical transmembrane passes span 385–405 (AGMI…LLYY), 410–430 (LLTA…LVLL), 441–461 (AGIA…VVFF), 489–509 (IVSG…LAIG), and 514–534 (FAFT…LVTW).

The protein belongs to the SecD/SecF family. SecD subfamily. Forms a complex with SecF. Part of the essential Sec protein translocation apparatus which comprises SecA, SecYEG and auxiliary proteins SecDF. Other proteins may also be involved.

The protein resides in the cell membrane. Its function is as follows. Part of the Sec protein translocase complex. Interacts with the SecYEG preprotein conducting channel. SecDF uses the proton motive force (PMF) to complete protein translocation after the ATP-dependent function of SecA. The sequence is that of Protein translocase subunit SecD from Mycobacterium tuberculosis (strain CDC 1551 / Oshkosh).